Consider the following 862-residue polypeptide: Protein translocase subunit SecA (862 aa).

ATP is bound by residues Gln-88, Gly-106–Thr-110, and Asp-506. Zn(2+)-binding residues include Cys-839, Cys-841, Cys-850, and His-851.

It belongs to the SecA family. As to quaternary structure, monomer and homodimer. Part of the essential Sec protein translocation apparatus which comprises SecA, SecYEG and auxiliary proteins SecDF-YajC and YidC. Requires Zn(2+) as cofactor.

Its subcellular location is the cell inner membrane. It is found in the cytoplasm. The enzyme catalyses ATP + H2O + cellular proteinSide 1 = ADP + phosphate + cellular proteinSide 2.. Functionally, part of the Sec protein translocase complex. Interacts with the SecYEG preprotein conducting channel. Has a central role in coupling the hydrolysis of ATP to the transfer of proteins into and across the cell membrane, serving as an ATP-driven molecular motor driving the stepwise translocation of polypeptide chains across the membrane. The protein is Protein translocase subunit SecA of Campylobacter jejuni (strain RM1221).